A 1489-amino-acid chain; its full sequence is Type-2 histone deacetylase 1 (1489 aa).

4 stretches are compositionally biased toward low complexity: residues 135-163 (NNNN…SPSG), 190-259 (SNGN…SRNL), 281-306 (NIIN…TSTT), and 325-399 (SPTS…NINN). 5 disordered regions span residues 135–259 (NNNN…SRNL), 281–556 (NIIN…NYQQ), 915–935 (NNNN…DDQL), 955–1024 (NISK…RDRD), and 1151–1185 (STGI…GEQC). Polar residues predominate over residues 400-430 (VANGTPRPSLQTSRLQGKLPSPQQYNTSPSH). 4 stretches are compositionally biased toward low complexity: residues 431 to 450 (QQYP…PIQS), 486 to 553 (NNNN…NNSN), 915 to 928 (NNNN…NNNN), and 959 to 988 (NNNN…NNNN). Basic and acidic residues-rich tracts occupy residues 989-1001 (RNRD…ERDN) and 1010-1024 (IEKE…RDRD). Positions 1158-1180 (STSTPITTTGTATVTPGSTTSST) are enriched in low complexity. His-1232 serves as the catalytic Proton acceptor. The segment covering 1325–1335 (EQNDYDDDDNN) has biased composition (acidic residues). The segment at 1325-1374 (EQNDYDDDDNNNDVNNNNNNNNNNNNNNNNNNNNKNNNNNNSNSITQQST) is disordered. The span at 1336 to 1367 (NDVNNNNNNNNNNNNNNNNNNNNKNNNNNNSN) shows a compositional bias: low complexity.

The protein belongs to the histone deacetylase family. HD type 2 subfamily.

It localises to the nucleus. Its subcellular location is the cytoplasm. It carries out the reaction N(6)-acetyl-L-lysyl-[histone] + H2O = L-lysyl-[histone] + acetate. In terms of biological role, responsible for the deacetylation of lysine residues on the N-terminal part of the core histones (H2A, H2B, H3 and H4). Histone deacetylation plays an important role in transcriptional regulation, cell cycle progression and developmental events. Histone deacetylases act via the formation of large multiprotein complexes. This is Type-2 histone deacetylase 1 (hdaD) from Dictyostelium discoideum (Social amoeba).